The following is a 525-amino-acid chain: GMP synthase [glutamine-hydrolyzing] (525 aa).

The Glutamine amidotransferase type-1 domain maps to 16–205 (PVLVVDFGAQ…LHDFAGIGAR (190 aa)). Catalysis depends on C93, which acts as the Nucleophile. Active-site residues include H179 and E181. The region spanning 206–399 (WTPANIANAL…LGLPEEIVAR (194 aa)) is the GMPS ATP-PPase domain. 233-239 (SGGVDSA) contributes to the ATP binding site.

Homodimer.

The enzyme catalyses XMP + L-glutamine + ATP + H2O = GMP + L-glutamate + AMP + diphosphate + 2 H(+). Its pathway is purine metabolism; GMP biosynthesis; GMP from XMP (L-Gln route): step 1/1. Catalyzes the synthesis of GMP from XMP. The sequence is that of GMP synthase [glutamine-hydrolyzing] from Mycobacterium marinum (strain ATCC BAA-535 / M).